Consider the following 173-residue polypeptide: Mesencephalic astrocyte-derived neurotrophic factor homolog (173 aa).

Residues 1–22 (MKTAHLVVVVCFLAGALQTAVA) form the signal peptide. Cystine bridges form between C28–C114, C31–C103, C61–C72, and C148–C151.

This sequence belongs to the ARMET family.

The protein localises to the secreted. Its function is as follows. Required during the maturation of the embryonic nervous system for maintenance of neuronal and cuticular connectivity. Essential for maintenance of dopaminergic neurons and dopamine levels. The chain is Mesencephalic astrocyte-derived neurotrophic factor homolog from Drosophila ananassae (Fruit fly).